A 360-amino-acid chain; its full sequence is Probable neutral protease 2 homolog A (360 aa).

The N-terminal stretch at methionine 1–alanine 17 is a signal peptide. Positions alanine 18–arginine 183 are excised as a propeptide. 3 disulfide bridges follow: cysteine 191-cysteine 262, cysteine 269-cysteine 287, and cysteine 300-cysteine 360. A glycan (N-linked (GlcNAc...) asparagine) is linked at asparagine 205. Histidine 311 is a Zn(2+) binding site. Glutamate 312 is a catalytic residue. Zn(2+) is bound by residues histidine 315 and aspartate 326.

This sequence belongs to the peptidase M35 family. The cofactor is Zn(2+).

It localises to the secreted. It catalyses the reaction Preferential cleavage of bonds with hydrophobic residues in P1'. Also 3-Asn-|-Gln-4 and 8-Gly-|-Ser-9 bonds in insulin B chain.. Its function is as follows. Probable secreted metalloprotease that shows high activities on basic nuclear substrates such as histone and protamine. May be involved in virulence. This is Probable neutral protease 2 homolog A (NpII-A) from Trichophyton rubrum (Athlete's foot fungus).